The following is a 194-amino-acid chain: ATP-dependent Clp protease proteolytic subunit (194 aa).

Residue S98 is the Nucleophile of the active site. Residue H123 is part of the active site.

Belongs to the peptidase S14 family. Fourteen ClpP subunits assemble into 2 heptameric rings which stack back to back to give a disk-like structure with a central cavity, resembling the structure of eukaryotic proteasomes.

Its subcellular location is the cytoplasm. The enzyme catalyses Hydrolysis of proteins to small peptides in the presence of ATP and magnesium. alpha-casein is the usual test substrate. In the absence of ATP, only oligopeptides shorter than five residues are hydrolyzed (such as succinyl-Leu-Tyr-|-NHMec, and Leu-Tyr-Leu-|-Tyr-Trp, in which cleavage of the -Tyr-|-Leu- and -Tyr-|-Trp bonds also occurs).. Its function is as follows. Cleaves peptides in various proteins in a process that requires ATP hydrolysis. Has a chymotrypsin-like activity. Plays a major role in the degradation of misfolded proteins. This chain is ATP-dependent Clp protease proteolytic subunit, found in Syntrophotalea carbinolica (strain DSM 2380 / NBRC 103641 / GraBd1) (Pelobacter carbinolicus).